Here is a 162-residue protein sequence, read N- to C-terminus: Serine-protein kinase RsbW (162 aa).

Belongs to the anti-sigma-factor family.

It catalyses the reaction L-seryl-[protein] + ATP = O-phospho-L-seryl-[protein] + ADP + H(+). The enzyme catalyses L-threonyl-[protein] + ATP = O-phospho-L-threonyl-[protein] + ADP + H(+). Its function is as follows. Negative regulator of sigma-B activity. Phosphorylates and inactivates its specific antagonist protein, RsbV. Upon phosphorylation of RsbV, RsbW is released and binds to sigma-B, thereby blocking its ability to form an RNA polymerase holoenzyme (E-sigma-B). In Halalkalibacterium halodurans (strain ATCC BAA-125 / DSM 18197 / FERM 7344 / JCM 9153 / C-125) (Bacillus halodurans), this protein is Serine-protein kinase RsbW.